The primary structure comprises 562 residues: Eukaryotic translation initiation factor 3 subunit L (562 aa).

A disordered region spans residues 1 to 29 (MSHAKEDYDSSYDPYSYQADYDGHTGDPK). The span at 11–20 (SYDPYSYQAD) shows a compositional bias: low complexity. Residues 329-535 (DSIRVFANIL…IHIADTKVAR (207 aa)) form the PCI domain.

This sequence belongs to the eIF-3 subunit L family. In terms of assembly, component of the eukaryotic translation initiation factor 3 (eIF-3) complex, which is composed of 13 subunits: eif3a, eif3b, eif3c, eif3d, eif3e, eif3f, eif3g, eif3h, eif3i, eif3j, eif3k, eif3l and eif3m.

The protein resides in the cytoplasm. Component of the eukaryotic translation initiation factor 3 (eIF-3) complex, which is involved in protein synthesis of a specialized repertoire of mRNAs and, together with other initiation factors, stimulates binding of mRNA and methionyl-tRNAi to the 40S ribosome. The eIF-3 complex specifically targets and initiates translation of a subset of mRNAs involved in cell proliferation. This chain is Eukaryotic translation initiation factor 3 subunit L (eif3l), found in Xenopus laevis (African clawed frog).